The primary structure comprises 214 residues: Reticulon-3-B (214 aa).

The interval 1–22 (MAETSGPQSSHISSSSAGDKGS) is disordered. The region spanning 26 to 214 (VRDLLYWRDV…LPGALKKKSE (189 aa)) is the Reticulon domain. 2 helical membrane passes run 46-66 (MVLLLSLAAFSIISVISYLVL) and 150-170 (TYIGAVFNGITLLILGVLLAF).

Homodimer.

The protein resides in the endoplasmic reticulum membrane. It is found in the golgi apparatus membrane. May be involved in membrane trafficking in the early secretory pathway. This chain is Reticulon-3-B (rtn3-b), found in Xenopus laevis (African clawed frog).